A 102-amino-acid chain; its full sequence is MANKKIRIRLKAYEHRTLDTAAEKIVETATRTGATVAGPVPLPTERSLYTIIRATHKYKDSREQFEMRTHKRLVDIINPTQKTVDALMKLDLPSGVNVEIKL.

The protein belongs to the universal ribosomal protein uS10 family. In terms of assembly, part of the 30S ribosomal subunit.

Its function is as follows. Involved in the binding of tRNA to the ribosomes. The protein is Small ribosomal subunit protein uS10 of Streptococcus pyogenes serotype M3 (strain SSI-1).